A 322-amino-acid chain; its full sequence is GTP 3',8-cyclase (322 aa).

Residues 5–217 (SYGRVIDYLR…NIIAQKYSFK (213 aa)) form the Radical SAM core domain. A GTP-binding site is contributed by R14. C21 and C25 together coordinate [4Fe-4S] cluster. Y27 contributes to the S-adenosyl-L-methionine binding site. C28 lines the [4Fe-4S] cluster pocket. A GTP-binding site is contributed by R64. Residue G68 participates in S-adenosyl-L-methionine binding. T95 is a binding site for GTP. S119 is an S-adenosyl-L-methionine binding site. K155 contributes to the GTP binding site. M189 contacts S-adenosyl-L-methionine. Residues C249 and C252 each coordinate [4Fe-4S] cluster. 254-256 (RIR) is a binding site for GTP. C266 contacts [4Fe-4S] cluster.

This sequence belongs to the radical SAM superfamily. MoaA family. As to quaternary structure, monomer and homodimer. [4Fe-4S] cluster serves as cofactor.

It catalyses the reaction GTP + AH2 + S-adenosyl-L-methionine = (8S)-3',8-cyclo-7,8-dihydroguanosine 5'-triphosphate + 5'-deoxyadenosine + L-methionine + A + H(+). It functions in the pathway cofactor biosynthesis; molybdopterin biosynthesis. Functionally, catalyzes the cyclization of GTP to (8S)-3',8-cyclo-7,8-dihydroguanosine 5'-triphosphate. In Campylobacter lari (strain RM2100 / D67 / ATCC BAA-1060), this protein is GTP 3',8-cyclase.